The chain runs to 352 residues: Phosphoribosylformylglycinamidine cyclo-ligase (352 aa).

It belongs to the AIR synthase family.

Its subcellular location is the cytoplasm. The catalysed reaction is 2-formamido-N(1)-(5-O-phospho-beta-D-ribosyl)acetamidine + ATP = 5-amino-1-(5-phospho-beta-D-ribosyl)imidazole + ADP + phosphate + H(+). It functions in the pathway purine metabolism; IMP biosynthesis via de novo pathway; 5-amino-1-(5-phospho-D-ribosyl)imidazole from N(2)-formyl-N(1)-(5-phospho-D-ribosyl)glycinamide: step 2/2. The polypeptide is Phosphoribosylformylglycinamidine cyclo-ligase (Pseudomonas fluorescens (strain Pf0-1)).